A 230-amino-acid chain; its full sequence is MKKAVILLSGGMDSAVVTAIAQSQGFMVHALSIRYGQRHTSELDAAVRIARALNVVAHKVVDVDLRSIGGSALTDDIEIPDAGGEGIPVTYVPARNTIMLSLALGWAEVIGAADIFCGVNAVDYSGYPDCRPQFITAFETLANLATKVGVEGTQLHVHAPLQFLSKAEIVHEGLLHGVDFGLTVSCYRADVDGRACGRCDACKLRVAGFADAGVVDPTRYMELPCSLLLL.

Residue 8-18 (LSGGMDSAVVT) coordinates ATP. Zn(2+) is bound by residues C186, C196, C199, and C202.

This sequence belongs to the QueC family. It depends on Zn(2+) as a cofactor.

The enzyme catalyses 7-carboxy-7-deazaguanine + NH4(+) + ATP = 7-cyano-7-deazaguanine + ADP + phosphate + H2O + H(+). The protein operates within purine metabolism; 7-cyano-7-deazaguanine biosynthesis. Its function is as follows. Catalyzes the ATP-dependent conversion of 7-carboxy-7-deazaguanine (CDG) to 7-cyano-7-deazaguanine (preQ(0)). In Xylella fastidiosa (strain M23), this protein is 7-cyano-7-deazaguanine synthase.